The chain runs to 351 residues: Probable protein phosphatase 2C 8 (351 aa).

The interval 1 to 63 (MLEKESDLTA…REAEEDKPSF (63 aa)) is disordered. A compositionally biased stretch (basic and acidic residues) spans 54-63 (REAEEDKPSF). The region spanning 74–348 (EADVAEDKGA…DNCTAIVIVF (275 aa)) is the PPM-type phosphatase domain. Mn(2+)-binding residues include Asp114, Gly115, Asp295, and Asp339.

This sequence belongs to the PP2C family. Requires Mg(2+) as cofactor. It depends on Mn(2+) as a cofactor.

The enzyme catalyses O-phospho-L-seryl-[protein] + H2O = L-seryl-[protein] + phosphate. The catalysed reaction is O-phospho-L-threonyl-[protein] + H2O = L-threonyl-[protein] + phosphate. The protein is Probable protein phosphatase 2C 8 of Arabidopsis thaliana (Mouse-ear cress).